The primary structure comprises 333 residues: MHIAVLGAGSWGTTLAVLLARKGYAVNLWAHRPEFADQLAAERENRRYLNGVRFPDTLRVFTSLHEAVSPADMVVTAVPSQALRETVEQIRDLPMQGRVIVNVAKGIELKTGKRMSEVLLEALPGVRISGVAALYGPSHAEEVSKEQPTTVVASSPSVETANRVQEVFHTSMFRVYTNTDIIGVEIAGSVKNIIAIAAGISDGIGYGDNAKAAIITRGLAEMSRLAVSLGGDPVTVSGLAGIGDLVVTCLSRHSRNRYVGEEIGRGRSLDDVVAHMNMVAEGVFTSKAVYDLSRTKGVEMPITQAVYEMLFEGKPVQQAILDLMTREPKKEVY.

Residues S10, W11, H31, R32, and K105 each contribute to the NADPH site. Sn-glycerol 3-phosphate is bound by residues K105, G136, and S138. A140 contributes to the NADPH binding site. Sn-glycerol 3-phosphate-binding residues include K191, D244, S254, R255, and N256. The active-site Proton acceptor is K191. NADPH is bound at residue R255. Positions 279 and 281 each coordinate NADPH.

The protein belongs to the NAD-dependent glycerol-3-phosphate dehydrogenase family.

The protein localises to the cytoplasm. The enzyme catalyses sn-glycerol 3-phosphate + NAD(+) = dihydroxyacetone phosphate + NADH + H(+). It catalyses the reaction sn-glycerol 3-phosphate + NADP(+) = dihydroxyacetone phosphate + NADPH + H(+). The protein operates within membrane lipid metabolism; glycerophospholipid metabolism. Functionally, catalyzes the reduction of the glycolytic intermediate dihydroxyacetone phosphate (DHAP) to sn-glycerol 3-phosphate (G3P), the key precursor for phospholipid synthesis. This is Glycerol-3-phosphate dehydrogenase [NAD(P)+] from Chlorobium limicola (strain DSM 245 / NBRC 103803 / 6330).